Consider the following 486-residue polypeptide: Ribosome biogenesis protein YTM1 (486 aa).

The interval 12–99 (RQLPINLFTR…ESQIDVEYVR (88 aa)) is ubiquitin-like (UBL) domain. WD repeat units follow at residues 212-251 (GHTG…PTEH), 305-345 (GHTG…AGAL), 349-388 (PFDK…SLIS), 392-432 (PTTS…TALF), and 454-486 (VLGE…ARGE). The tract at residues 249–299 (TEHQVPADPVSYLPGQGTKKRRKLEKDQEKAPIEGLTDGDATGEGGWRRAP) is disordered.

Belongs to the WD repeat WDR12/YTM1 family. In terms of assembly, component of the NOP7 complex, composed of ERB1, NOP7 and YTM1. The complex is held together by ERB1, which interacts with NOP7 via its N-terminal domain and with YTM1 via a high-affinity interaction between the seven-bladed beta-propeller domains of the 2 proteins. The NOP7 complex associates with the 66S pre-ribosome. Interacts (via UBL domain) with MDN1 (via VWFA/MIDAS domain).

It is found in the nucleus. Its subcellular location is the nucleolus. The protein resides in the nucleoplasm. Functionally, component of the NOP7 complex, which is required for maturation of the 25S and 5.8S ribosomal RNAs and formation of the 60S ribosome. This is Ribosome biogenesis protein YTM1 from Cryptococcus neoformans var. neoformans serotype D (strain B-3501A) (Filobasidiella neoformans).